We begin with the raw amino-acid sequence, 599 residues long: Putative sensor histidine kinase NtrY-like (599 aa).

4 consecutive transmembrane segments (helical) span residues Val17–Ile37, Phe44–Leu64, Ile85–Val105, and Ile285–Phe305. Positions Ala307–Arg361 constitute an HAMP domain. Positions Lys378–Lys589 constitute a Histidine kinase domain. His381 bears the Phosphohistidine; by autocatalysis mark.

It is found in the cell membrane. The catalysed reaction is ATP + protein L-histidine = ADP + protein N-phospho-L-histidine.. Member of the two-component regulatory system RF_0427/RF_0895. In Rickettsia felis (strain ATCC VR-1525 / URRWXCal2) (Rickettsia azadi), this protein is Putative sensor histidine kinase NtrY-like.